Reading from the N-terminus, the 136-residue chain is Large-conductance mechanosensitive channel (136 aa).

2 consecutive transmembrane segments (helical) span residues 10–30 (FAMR…AAFG) and 76–96 (GAFI…FIAI).

This sequence belongs to the MscL family. As to quaternary structure, homopentamer.

Its subcellular location is the cell inner membrane. In terms of biological role, channel that opens in response to stretch forces in the membrane lipid bilayer. May participate in the regulation of osmotic pressure changes within the cell. The chain is Large-conductance mechanosensitive channel from Pectobacterium atrosepticum (strain SCRI 1043 / ATCC BAA-672) (Erwinia carotovora subsp. atroseptica).